Reading from the N-terminus, the 266-residue chain is DNA primase (266 aa).

The disordered stretch occupies residues 244 to 266 (VTTTTTPSPPKIGSMQTTTKSTT). Over residues 257–266 (SMQTTTKSTT) the composition is skewed to polar residues.

Belongs to the baculoviridae LEF-1 family. As to quaternary structure, interacts with LEF-2.

Its function is as follows. Plays an essential role in viral DNA replication. May generates single-stranded DNA for both leading and lagging strand synthesis. The primase initiates primer synthesis and thereby produces large amount of short RNA primers on the lagging strand that the polymerase elongates using dNTPs. In Autographa californica nuclear polyhedrosis virus (AcMNPV), this protein is DNA primase (LEF-1).